We begin with the raw amino-acid sequence, 376 residues long: MQKTAIIAEYNPFHNGHYYQAQTARHETGADVMIAIMSAQFTQRGEPASFDKWKRAKAAVESGAIDLVIELPTQYGVQRADRFASASVSIAEQLRCQTLSFGSESGDIDAILHAARSHVEETPRYKEALKKALQEGHSSAQASSRAFRTVYPSFDLTRPNNILGYHYAKAAKSIQLHTVKRLGADYHDPSLMDVMSATGIRAHYLDIGEVRAVPASTEAMFRTRPMTHWEHYWPVLQFKLRTLPLHTMMELVGIDASLAPRLKQAGVEPSFERALAAVSTRRYTRTAIQRAFVAVLLHWLKDEAPTRFDEVPYVRPLAFNDLGRLALRDVKDDVPLVSKFDARLDFEARVTEAYRLPLQDDALIEHRQRPQFISSK.

Residues 7–20 (IAEY…HYYQ), G102, N160, and R181 each bind ATP.

Belongs to the TmcAL family.

Its subcellular location is the cytoplasm. It catalyses the reaction cytidine(34) in elongator tRNA(Met) + acetate + ATP = N(4)-acetylcytidine(34) in elongator tRNA(Met) + AMP + diphosphate. In terms of biological role, catalyzes the formation of N(4)-acetylcytidine (ac(4)C) at the wobble position of elongator tRNA(Met), using acetate and ATP as substrates. First activates an acetate ion to form acetyladenylate (Ac-AMP) and then transfers the acetyl group to tRNA to form ac(4)C34. The chain is tRNA(Met) cytidine acetate ligase from Exiguobacterium sp. (strain ATCC BAA-1283 / AT1b).